The chain runs to 199 residues: NAD(P)H dehydrogenase (quinone) (199 aa).

The 187-residue stretch at V4–I190 folds into the Flavodoxin-like domain. Residues S10–I15 and T78–F80 contribute to the FMN site. Y12 contacts NAD(+). W98 is a binding site for substrate. FMN is bound by residues S113–G119 and H134.

It belongs to the WrbA family. The cofactor is FMN.

The catalysed reaction is a quinone + NADH + H(+) = a quinol + NAD(+). It carries out the reaction a quinone + NADPH + H(+) = a quinol + NADP(+). This chain is NAD(P)H dehydrogenase (quinone), found in Nitrobacter winogradskyi (strain ATCC 25391 / DSM 10237 / CIP 104748 / NCIMB 11846 / Nb-255).